Consider the following 452-residue polypeptide: Zinc finger protein 277 (452 aa).

A C2H2-type 1 zinc finger spans residues 200–224 (LMCLYCEKIFRDRPTLKEHMRKKGH). The interval 248-271 (APTPRKQHLQKRRRETASVSTVAD) is disordered. Residues 252-261 (RKQHLQKRRR) are compositionally biased toward basic residues. A C2H2-type 2 zinc finger spans residues 361 to 385 (LRCVTCDLQFDEEELLVEHMAQESH).

The protein belongs to the ZNF277 family. As to quaternary structure, interacts with components of the origin recognition complex (ORC) complex, Orc2 and Orc3, components of the SAGA transcription coactivator-HAT complex, Gcn5 and e(y)2, components of the mRNP biogenesis THO complex, thoc5 and e(y)2, and a component of the TFIID complex, TBP. Also interacts with polybromo, a component of the chromatin remodeling SWI/SNF complex.

The protein localises to the nucleus. Its subcellular location is the cytoplasm. Functionally, DNA binding protein which is involved in the positive regulation of both basal and inducible transcription. Mainly localizes to active promoter sites and interacts with components of various transcription and replication regulatory complexes, such as the ORC, SAGA, THO, TFIID and SWI/SNF complexes. It may therefore regulate transcription by promoting the association of these complexes to their binding sites. This chain is Zinc finger protein 277, found in Drosophila melanogaster (Fruit fly).